The following is a 317-amino-acid chain: L-lactate dehydrogenase (317 aa).

NAD(+) is bound by residues 16-17, D38, K43, Y69, and 83-84; these read FV and GA. Positions 86 and 92 each coordinate substrate. NAD(+)-binding positions include S105, 122 to 124, and S147; that span reads ATN. Residue 124 to 127 participates in substrate binding; it reads NPVD. 152 to 155 provides a ligand contact to substrate; it reads DTAR. Beta-D-fructose 1,6-bisphosphate-binding positions include R157 and 169–172; that span reads QNVH. H179 functions as the Proton acceptor in the catalytic mechanism. Phosphotyrosine is present on Y224. T233 serves as a coordination point for substrate.

It belongs to the LDH/MDH superfamily. LDH family. As to quaternary structure, exists as a dimer and a tetramer (dimer of dimers). The conversion occurs via the binding of fructose 1,6-bisphosphate (FBP) to the dimer.

It is found in the cytoplasm. It catalyses the reaction (S)-lactate + NAD(+) = pyruvate + NADH + H(+). It participates in fermentation; pyruvate fermentation to lactate; (S)-lactate from pyruvate: step 1/1. Allosterically activated by fructose 1,6-bisphosphate (FBP). The improvement in affinity for substrate occurs in two steps; the binding of fructose 1,6-bisphosphate (FBP) to the dimer, and the dimer to tetramer conversion. Its function is as follows. Catalyzes the conversion of lactate to pyruvate. The sequence is that of L-lactate dehydrogenase from Geobacillus stearothermophilus (Bacillus stearothermophilus).